An 843-amino-acid chain; its full sequence is MTQVTVKELAKVVDTPVERLLQQMREAGLPHTAAEQVVTDNEKQALLTHLKSGHKAKVEEPRKITLQRKTTSTLRVAGSKSISVEVRKKKVFVQRSPEEIEAERKREMDERRAVENAARQKAEEEAKRRAEEDARNQPAAGQPASAPAQPVAAAEPVREAPAPAAAAPAPASAAPSADARKRDEQRRPDKPRADDRNARGGDGERKNAPHRASVKEKAPAPRVAPRTTDEESDSFRRGGRGKSRLKKRNAHGFQSPTGPVIRDVAIGETITVGELSAQMSVKAAEVIKFMFKMGTPVTINQVLDQETAQLIAEELGHKVTLVSDNALEDSLAESLKFEGESFSRAPVVTVMGHVDHGKTSLLDYIRRAKVAAGEAGGITQHIGAYHVETERGMVTFLDTPGHAAFTAMRARGAKATDIVILVVAADDGVMPQTIEAVQHAVAAGVPLVVAVNKIDKPGADLDRIRSELSVHGVTSEEWGGDTPFVSVSAKMGTGVDELLEAVLLQAEVLELKATPSAPGRGVVVESRLDKGRGPVATVLVQDGTLRQGDMVLVGSNFGRIRAMLDENGKPVKEAGPSIPVEILGLDGTPDAGDEMSVLADEKKAREVALFRQGKFREVKLARAHAGKLENIFENMGQEEKKTLNIVLKSDVRGSLEALQGALGGLGNDEVQVRVVGGGVGGITESDANLALASNAVLFGFNVRADAGARKIVEQEGLDMRYYNVIYDIIEDVKKALTGMLGSDVRENILGIAEVRDVFRSPKFGAIAGCMVLEGTVYRNRPIRVLREDIVIFEGELESLRRFKDDAAEVRAGMECGIGVKSYNDVKVGDKIEVFEKVQVARSL.

The interval Gln94 to Pro259 is disordered. The segment covering Ser96–Arg135 has biased composition (basic and acidic residues). The span at Asn136 to Ala177 shows a compositional bias: low complexity. Composition is skewed to basic and acidic residues over residues Asp178 to Pro219 and Thr227 to Arg236. The segment covering Arg237–Ala250 has biased composition (basic residues). The 170-residue stretch at Ser343–Lys512 folds into the tr-type G domain. The interval Gly352–Thr359 is G1. Gly352–Thr359 contacts GTP. Residues Gly377–His381 are G2. Positions Asp398 to Gly401 are G3. GTP is bound by residues Asp398 to His402 and Asn452 to Asp455. A G4 region spans residues Asn452–Asp455. Residues Ser488–Lys490 form a G5 region.

The protein belongs to the TRAFAC class translation factor GTPase superfamily. Classic translation factor GTPase family. IF-2 subfamily.

The protein localises to the cytoplasm. In terms of biological role, one of the essential components for the initiation of protein synthesis. Protects formylmethionyl-tRNA from spontaneous hydrolysis and promotes its binding to the 30S ribosomal subunits. Also involved in the hydrolysis of GTP during the formation of the 70S ribosomal complex. This Pseudomonas savastanoi pv. phaseolicola (strain 1448A / Race 6) (Pseudomonas syringae pv. phaseolicola (strain 1448A / Race 6)) protein is Translation initiation factor IF-2.